Reading from the N-terminus, the 321-residue chain is Lipoyl synthase (321 aa).

[4Fe-4S] cluster-binding residues include cysteine 68, cysteine 73, cysteine 79, cysteine 94, cysteine 98, cysteine 101, and serine 308. Positions 80 to 297 (FNHGTATFMI…KVLADELGFT (218 aa)) constitute a Radical SAM core domain.

This sequence belongs to the radical SAM superfamily. Lipoyl synthase family. It depends on [4Fe-4S] cluster as a cofactor.

The protein localises to the cytoplasm. The catalysed reaction is [[Fe-S] cluster scaffold protein carrying a second [4Fe-4S](2+) cluster] + N(6)-octanoyl-L-lysyl-[protein] + 2 oxidized [2Fe-2S]-[ferredoxin] + 2 S-adenosyl-L-methionine + 4 H(+) = [[Fe-S] cluster scaffold protein] + N(6)-[(R)-dihydrolipoyl]-L-lysyl-[protein] + 4 Fe(3+) + 2 hydrogen sulfide + 2 5'-deoxyadenosine + 2 L-methionine + 2 reduced [2Fe-2S]-[ferredoxin]. Its pathway is protein modification; protein lipoylation via endogenous pathway; protein N(6)-(lipoyl)lysine from octanoyl-[acyl-carrier-protein]: step 2/2. In terms of biological role, catalyzes the radical-mediated insertion of two sulfur atoms into the C-6 and C-8 positions of the octanoyl moiety bound to the lipoyl domains of lipoate-dependent enzymes, thereby converting the octanoylated domains into lipoylated derivatives. This Shewanella sp. (strain ANA-3) protein is Lipoyl synthase.